Consider the following 921-residue polypeptide: Probable dipeptidyl-aminopeptidase B (921 aa).

Residues 1–33 form a disordered region; it reads MAGHTEENAQLLSTEQESVSRHSSDSAASTAST. The Cytoplasmic segment spans residues 1 to 109; it reads MAGHTEENAQ…NKSVDKKLRK (109 aa). Residues 8–17 are compositionally biased toward polar residues; it reads NAQLLSTEQE. A helical; Signal-anchor for type II membrane protein transmembrane segment spans residues 110 to 130; the sequence is LIWIVGGVFIGAWVLALFIFL. Residues 131–921 are Vacuolar-facing; it reads GKQAYKHSSE…VPLQIDAAKV (791 aa). The N-linked (GlcNAc...) asparagine glycan is linked to Asn-362. Ser-768 (charge relay system) is an active-site residue. N-linked (GlcNAc...) asparagine glycosylation is present at Asn-822. Catalysis depends on charge relay system residues Asp-845 and His-878.

This sequence belongs to the peptidase S9B family.

The protein localises to the vacuole membrane. The enzyme catalyses Release of an N-terminal dipeptide, Xaa-Yaa-|-Zaa-, from a polypeptide, preferentially when Yaa is Pro, provided Zaa is neither Pro nor hydroxyproline.. Functionally, type IV dipeptidyl-peptidase which removes N-terminal dipeptides sequentially from polypeptides having unsubstituted N-termini provided that the penultimate residue is proline. This Sclerotinia sclerotiorum (strain ATCC 18683 / 1980 / Ss-1) (White mold) protein is Probable dipeptidyl-aminopeptidase B (dapB).